A 204-amino-acid chain; its full sequence is Rho GDP-dissociation inhibitor 1 (204 aa).

The segment at 1 to 36 (MAEQEPTAEQLAQIAAENEEDEHSVNYKPPAQKSIQ) is disordered. A2 carries the post-translational modification N-acetylalanine. Residue S34 is modified to Phosphoserine. An N6-acetyllysine modification is found at K43. The residue at position 47 (S47) is a Phosphoserine. N6-acetyllysine is present on residues K105 and K127. Residues K138 and K141 each participate in a glycyl lysine isopeptide (Lys-Gly) (interchain with G-Cter in SUMO1); alternate cross-link. Residues K138 and K141 each participate in a glycyl lysine isopeptide (Lys-Gly) (interchain with G-Cter in SUMO2); alternate cross-link. K141 carries the N6-acetyllysine; alternate modification. N6-succinyllysine; alternate is present on K141. Position 178 is an N6-acetyllysine (K178).

The protein belongs to the Rho GDI family. In terms of assembly, monomer. Interacts with FER. Interacts with PLXNB3. Forms a heterodimer with RAC1. Interacts with RHOA, the affinity is increased by three orders of magnitude when RHOA is prenylated. Interacts with PSMD10; the interaction increases ARHGDIA association with RHOA, leading to ARHGDIA-mediated inactivation of RHOA and ROCK and prolonged AKT activation. Interacts with KANK2; the interaction is direct and may regulate the interaction of ARHGDIA with RHOA, RAC1 and CDC42. Interacts with RHOC. Interacts with CDC42. Interacts with NGFR (via death domain); NGFR binding decreases the affinity for RHOA. As to expression, in kidney glomerulus, expressed in podocytes and mesangial cells.

The protein localises to the cytoplasm. Its function is as follows. Controls Rho proteins homeostasis. Regulates the GDP/GTP exchange reaction of the Rho proteins by inhibiting the dissociation of GDP from them, and the subsequent binding of GTP to them. Retains Rho proteins such as CDC42, RAC1 and RHOA in an inactive cytosolic pool, regulating their stability and protecting them from degradation. Actively involved in the recycling and distribution of activated Rho GTPases in the cell, mediates extraction from membranes of both inactive and activated molecules due its exceptionally high affinity for prenylated forms. Through the modulation of Rho proteins, may play a role in cell motility regulation. In glioma cells, inhibits cell migration and invasion by mediating the signals of SEMA5A and PLXNB3 that lead to inactivation of RAC1. The polypeptide is Rho GDP-dissociation inhibitor 1 (Arhgdia) (Mus musculus (Mouse)).